Here is a 195-residue protein sequence, read N- to C-terminus: Acireductone dioxygenase 2 (195 aa).

Fe(2+)-binding residues include H94, H96, E100, and H139. 4 residues coordinate Ni(2+): H94, H96, E100, and H139.

The protein belongs to the acireductone dioxygenase (ARD) family. Fe(2+) serves as cofactor. The cofactor is Ni(2+).

It is found in the cytoplasm. Its subcellular location is the nucleus. It carries out the reaction 1,2-dihydroxy-5-(methylsulfanyl)pent-1-en-3-one + O2 = 4-methylsulfanyl-2-oxobutanoate + formate + 2 H(+). The catalysed reaction is 1,2-dihydroxy-5-(methylsulfanyl)pent-1-en-3-one + O2 = 3-(methylsulfanyl)propanoate + CO + formate + 2 H(+). It functions in the pathway amino-acid biosynthesis; L-methionine biosynthesis via salvage pathway; L-methionine from S-methyl-5-thio-alpha-D-ribose 1-phosphate: step 5/6. Catalyzes 2 different reactions between oxygen and the acireductone 1,2-dihydroxy-3-keto-5-methylthiopentene (DHK-MTPene) depending upon the metal bound in the active site. Fe-containing acireductone dioxygenase (Fe-ARD) produces formate and 2-keto-4-methylthiobutyrate (KMTB), the alpha-ketoacid precursor of methionine in the methionine recycle pathway. Ni-containing acireductone dioxygenase (Ni-ARD) produces methylthiopropionate, carbon monoxide and formate, and does not lie on the methionine recycle pathway. This is Acireductone dioxygenase 2 from Physcomitrium patens (Spreading-leaved earth moss).